A 638-amino-acid polypeptide reads, in one-letter code: 1-deoxy-D-xylulose-5-phosphate synthase (638 aa).

Thiamine diphosphate is bound by residues His-71 and 112 to 114 (SHA). Position 144 (Asp-144) interacts with Mg(2+). Residues 145–146 (GA), Asn-173, Tyr-284, and Glu-365 each bind thiamine diphosphate. Asn-173 serves as a coordination point for Mg(2+).

The protein belongs to the transketolase family. DXPS subfamily. As to quaternary structure, homodimer. Mg(2+) serves as cofactor. It depends on thiamine diphosphate as a cofactor.

It carries out the reaction D-glyceraldehyde 3-phosphate + pyruvate + H(+) = 1-deoxy-D-xylulose 5-phosphate + CO2. It participates in metabolic intermediate biosynthesis; 1-deoxy-D-xylulose 5-phosphate biosynthesis; 1-deoxy-D-xylulose 5-phosphate from D-glyceraldehyde 3-phosphate and pyruvate: step 1/1. In terms of biological role, catalyzes the acyloin condensation reaction between C atoms 2 and 3 of pyruvate and glyceraldehyde 3-phosphate to yield 1-deoxy-D-xylulose-5-phosphate (DXP). In Mycobacterium sp. (strain KMS), this protein is 1-deoxy-D-xylulose-5-phosphate synthase.